A 288-amino-acid chain; its full sequence is Proteasome subunit beta (288 aa).

Positions 1-57 (MTVDGQVGRWPVSAIPAAYMRPGSGSFTEFLAGAEPHLLPGRAGAQPAGAAPAVPHG) are cleaved as a propeptide — removed in mature form; by autocatalysis. The active-site Nucleophile is Thr-58.

This sequence belongs to the peptidase T1B family. As to quaternary structure, the 20S proteasome core is composed of 14 alpha and 14 beta subunits that assemble into four stacked heptameric rings, resulting in a barrel-shaped structure. The two inner rings, each composed of seven catalytic beta subunits, are sandwiched by two outer rings, each composed of seven alpha subunits. The catalytic chamber with the active sites is on the inside of the barrel. Has a gated structure, the ends of the cylinder being occluded by the N-termini of the alpha-subunits. Is capped by the proteasome-associated ATPase, ARC.

The protein localises to the cytoplasm. It catalyses the reaction Cleavage of peptide bonds with very broad specificity.. Its pathway is protein degradation; proteasomal Pup-dependent pathway. Its activity is regulated as follows. The formation of the proteasomal ATPase ARC-20S proteasome complex, likely via the docking of the C-termini of ARC into the intersubunit pockets in the alpha-rings, may trigger opening of the gate for substrate entry. Interconversion between the open-gate and close-gate conformations leads to a dynamic regulation of the 20S proteasome proteolysis activity. Component of the proteasome core, a large protease complex with broad specificity involved in protein degradation. The chain is Proteasome subunit beta from Nakamurella multipartita (strain ATCC 700099 / DSM 44233 / CIP 104796 / JCM 9543 / NBRC 105858 / Y-104) (Microsphaera multipartita).